The chain runs to 220 residues: Ras-related protein Rab-3A (220 aa).

Residues S31, S32, V33, G34, K35, T36, S37, T48, P49, S53, and T54 each coordinate GTP. T36 serves as a coordination point for Mg(2+). Positions 49-58 (PAFVSTVGID) match the Switch 1 motif. Mg(2+) is bound by residues T54 and D77. G80 contacts GTP. Residues 80–96 (GQERYRTITTAYYRGAM) carry the Switch 2 motif. T86 is modified (phosphothreonine). GTP is bound by residues N135, K136, D138, A166, and K167. 2 positions are modified to phosphoserine: S188 and S190. The segment at 194–220 (ADPAVTGAKQGPQLTDQQAPPHQDCAC) is disordered. S-geranylgeranyl cysteine attachment occurs at residues C218 and C220. Residue C220 is modified to Cysteine methyl ester.

The protein belongs to the small GTPase superfamily. Rab family. In terms of assembly, interacts with RIMS1 and RIMS2. Interacts with Rabphilin-3A/RPH3A and Rab effector Noc2/RPH3AL. Interacts with SYTL4. Interacts with RAB3IP. Interacts with SGSM1 and SGSM3. Interacts with SYT1. Interacts with MYH9; this interaction is essential for lysosome exocytosis and plasma membrane repair. Interacts with STXBP1; this interaction promotes RAB3A dissociation from the vesicle membrane. Interacts with SNCA. Interacts with GDI1, GDI2, CHM and CHML; phosphorylation at Thr-86 disrupts these interactions. Interacts with MADD (via uDENN domain); the GTP-bound form is preferred for interaction. Mg(2+) serves as cofactor. Phosphorylation of Thr-86 in the switch II region by LRRK2 prevents the association of RAB regulatory proteins, including CHM, CHML and RAB GDP dissociation inhibitors GDI1 and GDI2.

Its subcellular location is the cytoplasm. The protein resides in the cytosol. The protein localises to the lysosome. It localises to the cytoplasmic vesicle. It is found in the secretory vesicle. Its subcellular location is the cell projection. The protein resides in the axon. The protein localises to the cell membrane. It localises to the presynapse. It is found in the postsynapse. It carries out the reaction GTP + H2O = GDP + phosphate + H(+). With respect to regulation, regulated by guanine nucleotide exchange factors (GEFs) including RAB3IL1 and MADD which promote the exchange of bound GDP for free GTP. Regulated by GTPase activating proteins (GAPs) including RAB3GAP1 and TBC1D10B which increase the GTP hydrolysis activity. Inhibited by GDP dissociation inhibitors (GDIs) which prevent Rab-GDP dissociation. In terms of biological role, the small GTPases Rab are key regulators of intracellular membrane trafficking, from the formation of transport vesicles to their fusion with membranes. Rabs cycle between an inactive GDP-bound form and an active GTP-bound form that is able to recruit to membranes different sets of downstream effectors directly responsible for vesicle formation, movement, tethering and fusion. RAB3A plays a central role in regulated exocytosis and secretion. Controls the recruitment, tethering and docking of secretory vesicles to the plasma membrane. Upon stimulation, switches to its active GTP-bound form, cycles to vesicles and recruits effectors such as RIMS1, RIMS2, Rabphilin-3A/RPH3A, RPH3AL or SYTL4 to help the docking of vesicules onto the plasma membrane. Upon GTP hydrolysis by GTPase-activating protein, dissociates from the vesicle membrane allowing the exocytosis to proceed. Stimulates insulin secretion through interaction with RIMS2 or RPH3AL effectors in pancreatic beta cells. Regulates calcium-dependent lysosome exocytosis and plasma membrane repair (PMR) via the interaction with 2 effectors, SYTL4 and myosin-9/MYH9. Acts as a positive regulator of acrosome content secretion in sperm cells by interacting with RIMS1. Also plays a role in the regulation of dopamine release by interacting with synaptotagmin I/SYT. This Sus scrofa (Pig) protein is Ras-related protein Rab-3A (RAB3A).